The primary structure comprises 547 residues: Solute carrier family 22 member 7 (547 aa).

Residues 21–41 (VALLALPRVLLPMHFLLPIFL) form a helical membrane-spanning segment. A compositionally biased stretch (polar residues) spans 91–103 (NSTLWGEGQNSGE). Residues 91 to 112 (NSTLWGEGQNSGEQPEGEPSTV) form a disordered region. Helical transmembrane passes span 145 to 165 (AISTFFFAGVLVGAEVYGYLS), 179 to 199 (VSSLALGLASAASVSYIMFAI), 203 to 223 (LTGMALAGFTIIVMPLELEWL), 233 to 253 (VLSSTFWTGGVMLLALIGYLI), 258 to 278 (WLLLTVTLPCVPGILTLWWVP), 345 to 365 (ISLCCMVVWFGVNFSYYGVSL), 367 to 387 (LSGLGLNVYLTQLVFGAVELP), 403 to 423 (LTMAGTLLGAALAVGLRILVS), 431 to 451 (TALAVMGKAFSEAAFTTAYLF), 465 to 485 (MGLTALVGRLGGSLAPLAALL), and 492 to 512 (LPKLAYGGIALLAACTALLLP). Positions 521-547 (ETIQDVERKSAPSSLQEEEMPMKQVQD) are disordered.

It belongs to the major facilitator (TC 2.A.1) superfamily. Organic cation transporter (TC 2.A.1.19) family.

The protein resides in the basolateral cell membrane. It localises to the apical cell membrane. The protein localises to the cell membrane. The enzyme catalyses orotate(out) + L-glutamate(in) = orotate(in) + L-glutamate(out). It catalyses the reaction 3',5'-cyclic GMP(in) = 3',5'-cyclic GMP(out). The catalysed reaction is GMP(in) = GMP(out). It carries out the reaction 2'-deoxyguanosine(in) = 2'-deoxyguanosine(out). The enzyme catalyses GDP(in) = GDP(out). It catalyses the reaction guanosine(in) = guanosine(out). The catalysed reaction is GTP(in) = GTP(out). It carries out the reaction 3',5'-cyclic AMP(in) = 3',5'-cyclic AMP(out). The enzyme catalyses creatinine(in) = creatinine(out). It catalyses the reaction prostaglandin E2(out) = prostaglandin E2(in). The catalysed reaction is 2-oxoglutarate(in) = 2-oxoglutarate(out). It carries out the reaction glutarate(in) = glutarate(out). The enzyme catalyses urate(out) = urate(in). It catalyses the reaction estrone 3-sulfate(out) = estrone 3-sulfate(in). Functionally, functions as a Na(+)-independent bidirectional multispecific transporter. Contributes to the renal and hepatic elimination of endogenous organic compounds from the systemic circulation into the urine and bile, respectively. Capable of transporting a wide range of purine and pyrimidine nucleobases, nucleosides and nucleotides, with cGMP, 2'deoxyguanosine and GMP being the preferred substrates. Functions as a pH- and chloride-independent cGMP bidirectional facilitative transporter that can regulate both intracellular and extracellular levels of cGMP and may be involved in cGMP signaling pathways. Mediates orotate/glutamate bidirectional exchange and most likely display a physiological role in hepatic release of glutamate into the blood. Involved in renal secretion and possible reabsorption of creatinine. Able to uptake prostaglandin E2 (PGE2) and may contribute to PGE2 renal excretion. Also transports alpha-ketoglutarate and urate. Apart from the orotate/glutamate exchange, the counterions for the uptake of other SLC22A7/OAT2 substrates remain to be identified. This Bos taurus (Bovine) protein is Solute carrier family 22 member 7 (SLC22A7).